Here is a 351-residue protein sequence, read N- to C-terminus: Protein RecA (351 aa).

68 to 75 serves as a coordination point for ATP; that stretch reads GPESSGKT.

The protein belongs to the RecA family.

It localises to the cytoplasm. Can catalyze the hydrolysis of ATP in the presence of single-stranded DNA, the ATP-dependent uptake of single-stranded DNA by duplex DNA, and the ATP-dependent hybridization of homologous single-stranded DNAs. It interacts with LexA causing its activation and leading to its autocatalytic cleavage. The polypeptide is Protein RecA (Chloroflexus aurantiacus (strain ATCC 29364 / DSM 637 / Y-400-fl)).